A 67-amino-acid chain; its full sequence is Conotoxin Cp1.1 (67 aa).

The N-terminal stretch at 1–26 (MMFRLTSVSCFLLVIACLNLFQVVLT) is a signal peptide. Cystine bridges form between Cys29-Cys43, Cys36-Cys48, Cys42-Cys52, and Cys47-Cys56. Residue Tyr60 is modified to Tyrosine amide. The propeptide occupies 64-67 (ATFQ).

This sequence belongs to the conotoxin I2 superfamily. Expressed by the venom duct.

The protein resides in the secreted. The sequence is that of Conotoxin Cp1.1 from Conus capitaneus (Captain cone).